Reading from the N-terminus, the 228-residue chain is PKHD-type hydroxylase XC_1340 (228 aa).

Residues 78–180 (RIYPPLFNRY…RVASFFWIQS (103 aa)) enclose the Fe2OG dioxygenase domain. Fe cation-binding residues include histidine 96, aspartate 98, and histidine 161. A 2-oxoglutarate-binding site is contributed by arginine 171.

It depends on Fe(2+) as a cofactor. Requires L-ascorbate as cofactor.

The protein is PKHD-type hydroxylase XC_1340 of Xanthomonas campestris pv. campestris (strain 8004).